Reading from the N-terminus, the 231-residue chain is Uracil-DNA glycosylase (231 aa).

The active-site Proton acceptor is D70.

This sequence belongs to the uracil-DNA glycosylase (UDG) superfamily. UNG family.

Its subcellular location is the cytoplasm. It carries out the reaction Hydrolyzes single-stranded DNA or mismatched double-stranded DNA and polynucleotides, releasing free uracil.. In terms of biological role, excises uracil residues from the DNA which can arise as a result of misincorporation of dUMP residues by DNA polymerase or due to deamination of cytosine. In Pseudomonas fluorescens (strain Pf0-1), this protein is Uracil-DNA glycosylase.